A 610-amino-acid polypeptide reads, in one-letter code: Glutamine--fructose-6-phosphate aminotransferase [isomerizing] (610 aa).

Residue Cys-2 is the Nucleophile; for GATase activity of the active site. One can recognise a Glutamine amidotransferase type-2 domain in the interval 2 to 219; that stretch reads CGIVGAVAQR…EGDVAEITRR (218 aa). SIS domains follow at residues 287 to 427 and 459 to 600; these read ADEL…LRGM and LAEG…VDQP. The active-site For Fru-6P isomerization activity is Lys-605.

Homodimer.

The protein localises to the cytoplasm. The enzyme catalyses D-fructose 6-phosphate + L-glutamine = D-glucosamine 6-phosphate + L-glutamate. Catalyzes the first step in hexosamine metabolism, converting fructose-6P into glucosamine-6P using glutamine as a nitrogen source. This chain is Glutamine--fructose-6-phosphate aminotransferase [isomerizing], found in Pectobacterium atrosepticum (strain SCRI 1043 / ATCC BAA-672) (Erwinia carotovora subsp. atroseptica).